The primary structure comprises 344 residues: Ferrochelatase (344 aa).

The Fe cation site is built by His190 and Glu270.

This sequence belongs to the ferrochelatase family.

The protein resides in the cytoplasm. The enzyme catalyses heme b + 2 H(+) = protoporphyrin IX + Fe(2+). Its pathway is porphyrin-containing compound metabolism; protoheme biosynthesis; protoheme from protoporphyrin-IX: step 1/1. Catalyzes the ferrous insertion into protoporphyrin IX. The protein is Ferrochelatase of Rickettsia felis (strain ATCC VR-1525 / URRWXCal2) (Rickettsia azadi).